We begin with the raw amino-acid sequence, 1311 residues long: Nephrocystin-3 (1311 aa).

A coiled-coil region spans residues 81 to 183 (SKNNEIASMQ…LQRLQAQGIQ (103 aa)). TPR repeat units lie at residues 889 to 923 (LSYW…EEKM), 927 to 960 (ADLY…RETA), 969 to 1002 (AQSL…SENA), 1011 to 1044 (AREL…RQKS), 1077 to 1110 (ARTL…RERV), 1119 to 1152 (AQSI…RRRA), 1161 to 1194 (AYTV…RQKS), 1203 to 1236 (ATAL…YEDS), and 1245 to 1278 (GETL…KETE).

It is found in the cell projection. It localises to the cilium. Functionally, required for normal ciliary development and function. Inhibits disheveled-1-induced canonical Wnt-signaling activity and may also play a role in the control of non-canonical Wnt signaling that regulates planar cell polarity. Probably acts as a molecular switch between different Wnt signaling pathways. Required for proper convergent extension cell movements. The chain is Nephrocystin-3 (nphp3) from Xenopus tropicalis (Western clawed frog).